Reading from the N-terminus, the 334-residue chain is Probable 2-ketogluconate reductase (334 aa).

Residues 164-165 (RI), 244-246 (AGR), and aspartate 270 contribute to the NAD(+) site. Residue arginine 246 is part of the active site. Glutamate 275 is an active-site residue. Residue histidine 294 is the Proton donor of the active site. 294–297 (HIGT) lines the NAD(+) pocket.

The protein belongs to the D-isomer specific 2-hydroxyacid dehydrogenase family.

It localises to the cytoplasm. It carries out the reaction D-gluconate + NADP(+) = 2-dehydro-D-gluconate + NADPH + H(+). Functionally, catalyzes the NADPH-dependent reduction of 2,5-diketo-D-gluconate (25DKG) to 5-keto-D-gluconate (5KDG), 2-keto-D-gluconate (2KDG) to D-gluconate, and 2-keto-L-gulonate (2KLG) to L-idonate (IA). The chain is Probable 2-ketogluconate reductase (tkrA) from Dictyostelium discoideum (Social amoeba).